Consider the following 371-residue polypeptide: Cytochrome b (371 aa).

Helical transmembrane passes span 25–45 (FGSM…FLAV), 69–90 (WMMQ…YIHI), 105–125 (WMSG…GYIL), and 170–190 (FFAL…LHIL). The heme b site is built by His75 and His89. Residues His174 and His188 each coordinate heme b. An a ubiquinone-binding site is contributed by His193. 4 consecutive transmembrane segments (helical) span residues 218–238 (YKDL…TFFL), 280–300 (LGGA…PFTH), 312–332 (MSQL…WAAT), and 339–358 (FMMI…ISNP).

This sequence belongs to the cytochrome b family. In terms of assembly, the cytochrome bc1 complex contains 3 respiratory subunits (MT-CYB, CYC1 and UQCRFS1), 2 core proteins (UQCRC1 and UQCRC2) and probably 6 low-molecular weight proteins. Requires heme b as cofactor.

The protein resides in the mitochondrion inner membrane. Functionally, component of the ubiquinol-cytochrome c reductase complex (complex III or cytochrome b-c1 complex) that is part of the mitochondrial respiratory chain. The b-c1 complex mediates electron transfer from ubiquinol to cytochrome c. Contributes to the generation of a proton gradient across the mitochondrial membrane that is then used for ATP synthesis. The protein is Cytochrome b (MT-CYB) of Casarea dussumieri (Round Island keel-scaled boa).